Consider the following 70-residue polypeptide: Exodeoxyribonuclease 7 small subunit (70 aa).

The protein belongs to the XseB family. As to quaternary structure, heterooligomer composed of large and small subunits.

The protein localises to the cytoplasm. It catalyses the reaction Exonucleolytic cleavage in either 5'- to 3'- or 3'- to 5'-direction to yield nucleoside 5'-phosphates.. Bidirectionally degrades single-stranded DNA into large acid-insoluble oligonucleotides, which are then degraded further into small acid-soluble oligonucleotides. The chain is Exodeoxyribonuclease 7 small subunit from Streptococcus gordonii (strain Challis / ATCC 35105 / BCRC 15272 / CH1 / DL1 / V288).